The chain runs to 117 residues: Immunoglobulin kappa variable 1D-17 (117 aa).

Residues 1–22 (MDMRVPAQLLGLLLLWFPGARC) form the signal peptide. Residues 23–45 (NIQMTQSPSAMSASVGDRVTITC) are framework-1. In terms of domain architecture, Ig-like spans 23-117 (NIQMTQSPSA…YYCLQHNSYP (95 aa)). A disulfide bond links cysteine 45 and cysteine 110. Positions 46–56 (RARQGISNYLA) are complementarity-determining-1. The interval 57-71 (WFQQKPGKVPKHLIY) is framework-2. The segment at 72 to 78 (AASSLQS) is complementarity-determining-2. The interval 79 to 110 (GVPSRFSGSGSGTEFTLTISSLQPEDFATYYC) is framework-3. The segment at 111–117 (LQHNSYP) is complementarity-determining-3.

Immunoglobulins are composed of two identical heavy chains and two identical light chains; disulfide-linked.

It localises to the secreted. Its subcellular location is the cell membrane. Its function is as follows. V region of the variable domain of immunoglobulin light chains that participates in the antigen recognition. Immunoglobulins, also known as antibodies, are membrane-bound or secreted glycoproteins produced by B lymphocytes. In the recognition phase of humoral immunity, the membrane-bound immunoglobulins serve as receptors which, upon binding of a specific antigen, trigger the clonal expansion and differentiation of B lymphocytes into immunoglobulins-secreting plasma cells. Secreted immunoglobulins mediate the effector phase of humoral immunity, which results in the elimination of bound antigens. The antigen binding site is formed by the variable domain of one heavy chain, together with that of its associated light chain. Thus, each immunoglobulin has two antigen binding sites with remarkable affinity for a particular antigen. The variable domains are assembled by a process called V-(D)-J rearrangement and can then be subjected to somatic hypermutations which, after exposure to antigen and selection, allow affinity maturation for a particular antigen. The sequence is that of Immunoglobulin kappa variable 1D-17 from Homo sapiens (Human).